Consider the following 347-residue polypeptide: N-acetyl-gamma-glutamyl-phosphate reductase (347 aa).

Cys152 is a catalytic residue.

The protein belongs to the NAGSA dehydrogenase family. Type 1 subfamily.

The protein resides in the cytoplasm. It catalyses the reaction N-acetyl-L-glutamate 5-semialdehyde + phosphate + NADP(+) = N-acetyl-L-glutamyl 5-phosphate + NADPH + H(+). It functions in the pathway amino-acid biosynthesis; L-arginine biosynthesis; N(2)-acetyl-L-ornithine from L-glutamate: step 3/4. Catalyzes the NADPH-dependent reduction of N-acetyl-5-glutamyl phosphate to yield N-acetyl-L-glutamate 5-semialdehyde. The chain is N-acetyl-gamma-glutamyl-phosphate reductase from Ehrlichia ruminantium (strain Gardel).